A 311-amino-acid chain; its full sequence is CAAX prenyl protease 2 (311 aa).

3 consecutive transmembrane segments (helical) span residues 14–34 (VATCVAMALFYVLILYVPTVI), 51–71 (FICAAICTVASLVFTAFILPI), and 94–114 (VVYPLLLTSLVYAGSLVLKLF). Glu164 serves as the catalytic Proton donor/acceptor. Residues 173 to 193 (IPLLLCAGFRINTAIFLCPVL) traverse the membrane as a helical segment. Catalysis depends on His198, which acts as the Proton donor/acceptor. 3 helical membrane passes run 219–239 (IVGLQLGYTVIFGAYASFLFI), 244–264 (LAAPLFAHIFCNYMGLPVLYA), and 268–288 (GLVSAAFLGGVVGFVLLLFPL).

This sequence belongs to the peptidase U48 family. As to expression, expressed in seeds, stems, leaves, flowers and siliques.

The protein resides in the endoplasmic reticulum membrane. It catalyses the reaction Hydrolyzes the peptide bond -P2-(S-farnesyl or geranylgeranyl)C-P1'-P2'-P3'-COOH where P1' and P2' are amino acids with aliphatic sidechains and P3' is any C-terminal residue.. Inhibited in vitro by L-1-tosylamido-2-phenylethyl chloromethyl ketone (TPCK) and N-ethylmaleimide, but not by EDTA. Its function is as follows. Protease involved in the processing of a variety of prenylated proteins containing the C-terminal CAAX motif, where C is a cysteine modified with an isoprenoid lipid, A is an aliphatic amino acid and X is any C-terminal amino acid. Proteolytically removes the C-terminal three residues of farnesylated and geranylated proteins, leaving the prenylated cysteine as the new C-terminus. The substrate specificity is only partially overlapping with that of FACE1. CAAX processing is likely required for subcellular targeting of prenylated proteins to the plasma membrane. The polypeptide is CAAX prenyl protease 2 (FACE2) (Arabidopsis thaliana (Mouse-ear cress)).